Reading from the N-terminus, the 189-residue chain is Glucose-6-phosphate isomerase (189 aa).

4 residues coordinate Fe cation: H88, H90, E97, and H136.

It belongs to the archaeal-type GPI family. In terms of assembly, homodimer. Fe cation is required as a cofactor.

The protein resides in the cytoplasm. It catalyses the reaction alpha-D-glucose 6-phosphate = beta-D-fructose 6-phosphate. The protein operates within carbohydrate degradation; glycolysis; D-glyceraldehyde 3-phosphate and glycerone phosphate from D-glucose: step 2/4. Its activity is regulated as follows. Inhibited by mannose 6-phosphate, fructose 1-phosphate and fructose 1,6-bisphosphate. In Pyrococcus furiosus (strain ATCC 43587 / DSM 3638 / JCM 8422 / Vc1), this protein is Glucose-6-phosphate isomerase (pgiA).